The sequence spans 588 residues: DNA mismatch repair protein MutL (588 aa).

This sequence belongs to the DNA mismatch repair MutL/HexB family.

Functionally, this protein is involved in the repair of mismatches in DNA. It is required for dam-dependent methyl-directed DNA mismatch repair. May act as a 'molecular matchmaker', a protein that promotes the formation of a stable complex between two or more DNA-binding proteins in an ATP-dependent manner without itself being part of a final effector complex. The protein is DNA mismatch repair protein MutL of Methanocorpusculum labreanum (strain ATCC 43576 / DSM 4855 / Z).